A 147-amino-acid polypeptide reads, in one-letter code: Large ribosomal subunit protein bL9 (147 aa).

The protein belongs to the bacterial ribosomal protein bL9 family.

Its function is as follows. Binds to the 23S rRNA. The protein is Large ribosomal subunit protein bL9 of Bacteroides thetaiotaomicron (strain ATCC 29148 / DSM 2079 / JCM 5827 / CCUG 10774 / NCTC 10582 / VPI-5482 / E50).